Consider the following 336-residue polypeptide: UDP-3-O-acylglucosamine N-acyltransferase (336 aa).

The active-site Proton acceptor is His233.

Belongs to the transferase hexapeptide repeat family. LpxD subfamily. As to quaternary structure, homotrimer.

It catalyses the reaction a UDP-3-O-[(3R)-3-hydroxyacyl]-alpha-D-glucosamine + a (3R)-hydroxyacyl-[ACP] = a UDP-2-N,3-O-bis[(3R)-3-hydroxyacyl]-alpha-D-glucosamine + holo-[ACP] + H(+). Its pathway is bacterial outer membrane biogenesis; LPS lipid A biosynthesis. In terms of biological role, catalyzes the N-acylation of UDP-3-O-acylglucosamine using 3-hydroxyacyl-ACP as the acyl donor. Is involved in the biosynthesis of lipid A, a phosphorylated glycolipid that anchors the lipopolysaccharide to the outer membrane of the cell. This Helicobacter pylori (strain HPAG1) protein is UDP-3-O-acylglucosamine N-acyltransferase.